A 301-amino-acid polypeptide reads, in one-letter code: Probable alpha-L-glutamate ligase (301 aa).

The ATP-grasp domain maps to 104-287 (LQLLSRKGIG…VADEIIRFIE (184 aa)). ATP-binding positions include Lys141, 178–179 (EF), Asp187, and 211–213 (RSN). Positions 248, 260, and 262 each coordinate Mg(2+). Mn(2+) is bound by residues Asp248, Glu260, and Asn262.

Belongs to the RimK family. Mg(2+) is required as a cofactor. Requires Mn(2+) as cofactor.

This Syntrophotalea carbinolica (strain DSM 2380 / NBRC 103641 / GraBd1) (Pelobacter carbinolicus) protein is Probable alpha-L-glutamate ligase.